The chain runs to 181 residues: Crossover junction endodeoxyribonuclease RuvC (181 aa).

Residues aspartate 8, glutamate 67, and aspartate 139 contribute to the active site. Positions 8, 67, and 139 each coordinate Mg(2+).

This sequence belongs to the RuvC family. In terms of assembly, homodimer which binds Holliday junction (HJ) DNA. The HJ becomes 2-fold symmetrical on binding to RuvC with unstacked arms; it has a different conformation from HJ DNA in complex with RuvA. In the full resolvosome a probable DNA-RuvA(4)-RuvB(12)-RuvC(2) complex forms which resolves the HJ. Mg(2+) serves as cofactor.

Its subcellular location is the cytoplasm. The enzyme catalyses Endonucleolytic cleavage at a junction such as a reciprocal single-stranded crossover between two homologous DNA duplexes (Holliday junction).. Functionally, the RuvA-RuvB-RuvC complex processes Holliday junction (HJ) DNA during genetic recombination and DNA repair. Endonuclease that resolves HJ intermediates. Cleaves cruciform DNA by making single-stranded nicks across the HJ at symmetrical positions within the homologous arms, yielding a 5'-phosphate and a 3'-hydroxyl group; requires a central core of homology in the junction. The consensus cleavage sequence is 5'-(A/T)TT(C/G)-3'. Cleavage occurs on the 3'-side of the TT dinucleotide at the point of strand exchange. HJ branch migration catalyzed by RuvA-RuvB allows RuvC to scan DNA until it finds its consensus sequence, where it cleaves and resolves the cruciform DNA. This chain is Crossover junction endodeoxyribonuclease RuvC, found in Acinetobacter baumannii (strain SDF).